Here is a 273-residue protein sequence, read N- to C-terminus: Putative pyruvate, phosphate dikinase regulatory protein (273 aa).

151-158 (GVSRTSKT) contacts ADP.

The protein belongs to the pyruvate, phosphate/water dikinase regulatory protein family. PDRP subfamily.

It catalyses the reaction N(tele)-phospho-L-histidyl/L-threonyl-[pyruvate, phosphate dikinase] + ADP = N(tele)-phospho-L-histidyl/O-phospho-L-threonyl-[pyruvate, phosphate dikinase] + AMP + H(+). The enzyme catalyses N(tele)-phospho-L-histidyl/O-phospho-L-threonyl-[pyruvate, phosphate dikinase] + phosphate + H(+) = N(tele)-phospho-L-histidyl/L-threonyl-[pyruvate, phosphate dikinase] + diphosphate. Bifunctional serine/threonine kinase and phosphorylase involved in the regulation of the pyruvate, phosphate dikinase (PPDK) by catalyzing its phosphorylation/dephosphorylation. This Desulfitobacterium hafniense (strain Y51) protein is Putative pyruvate, phosphate dikinase regulatory protein.